The sequence spans 304 residues: DDRGK domain-containing protein 1 (304 aa).

Residues methionine 1–aspartate 2 are Lumenal-facing. Residues leucine 3 to leucine 23 form a helical membrane-spanning segment. The Cytoplasmic segment spans residues glutamine 24–serine 304. The tract at residues glutamate 31–glutamate 174 is disordered. Positions arginine 53–alanine 82 are enriched in low complexity. A compositionally biased stretch (basic and acidic residues) spans leucine 105–glutamate 174.

The protein belongs to the DDRGK1 family. As to quaternary structure, interacts with Atg9; the interaction is transient.

It is found in the endoplasmic reticulum membrane. In terms of biological role, substrate adapter for ufmylation, the covalent attachment of the ubiquitin-like modifier UFM1 to substrate proteins. Required for ufmylation of Atg9; protects the nervous system during aging, possibly by stabilizing Atg9 and supporting its function. The polypeptide is DDRGK domain-containing protein 1 (Drosophila ananassae (Fruit fly)).